Reading from the N-terminus, the 296-residue chain is tRNA uridine(34) hydroxylase (296 aa).

The Rhodanese domain occupies 121–215 (AQPDVAVIDT…YLEDIPQDQS (95 aa)). C175 acts as the Cysteine persulfide intermediate in catalysis.

Belongs to the TrhO family.

The enzyme catalyses uridine(34) in tRNA + AH2 + O2 = 5-hydroxyuridine(34) in tRNA + A + H2O. Functionally, catalyzes oxygen-dependent 5-hydroxyuridine (ho5U) modification at position 34 in tRNAs. This is tRNA uridine(34) hydroxylase from Roseobacter denitrificans (strain ATCC 33942 / OCh 114) (Erythrobacter sp. (strain OCh 114)).